The chain runs to 341 residues: Glycerol-3-phosphate dehydrogenase [NAD(P)+] 1 (341 aa).

4 residues coordinate NADPH: S17, W18, R37, and K112. Positions 112 and 140 each coordinate sn-glycerol 3-phosphate. A144 contacts NADPH. 5 residues coordinate sn-glycerol 3-phosphate: K195, D248, S258, R259, and N260. The Proton acceptor role is filled by K195. R259 is a binding site for NADPH. The NADPH site is built by V283 and E285.

It belongs to the NAD-dependent glycerol-3-phosphate dehydrogenase family.

It is found in the cytoplasm. The catalysed reaction is sn-glycerol 3-phosphate + NAD(+) = dihydroxyacetone phosphate + NADH + H(+). The enzyme catalyses sn-glycerol 3-phosphate + NADP(+) = dihydroxyacetone phosphate + NADPH + H(+). It participates in membrane lipid metabolism; glycerophospholipid metabolism. Its function is as follows. Catalyzes the reduction of the glycolytic intermediate dihydroxyacetone phosphate (DHAP) to sn-glycerol 3-phosphate (G3P), the key precursor for phospholipid synthesis. The sequence is that of Glycerol-3-phosphate dehydrogenase [NAD(P)+] 1 from Mycobacterium bovis (strain ATCC BAA-935 / AF2122/97).